A 410-amino-acid chain; its full sequence is Venom metalloproteinase 2 (410 aa).

A signal peptide spans 1-22; that stretch reads MDTFILTYSILFLALFIESIHS. Asparagine 64, asparagine 112, asparagine 187, asparagine 231, asparagine 292, and asparagine 307 each carry an N-linked (GlcNAc...) asparagine glycan. A Peptidase M12B domain is found at 214-410; sequence FYPKLLVLVD…NNNVSKFIWS (197 aa). Position 365 (histidine 365) interacts with Zn(2+). The active site involves glutamate 366. Zn(2+)-binding residues include histidine 369 and histidine 375. Asparagine 403 is a glycosylation site (N-linked (GlcNAc...) asparagine).

This sequence in the C-terminal section; belongs to the venom metalloproteinase (M12B) family. As to quaternary structure, monomer. Zn(2+) serves as cofactor. Expressed by the venom gland.

It is found in the secreted. The gelatinase activity is inhibited by EDTA. Functionally, the recombinant protein has gelatinase activity. In vivo, injection of this recombinant into fifth instar L.oleracea (host) larvae results in partial insect mortality associated with the molt to sixth instar, with surviving insects showing retarded development and growth. In Eulophus pennicornis (Parasitoid wasp), this protein is Venom metalloproteinase 2.